We begin with the raw amino-acid sequence, 92 residues long: Acyl-CoA-binding protein (92 aa).

In terms of domain architecture, ACB spans 3–88 (LKEDFEEHAE…VKQLLEAEAS (86 aa)). An acyl-CoA-binding positions include 30–34 (YGLYK), Lys56, and Tyr75.

It belongs to the ACBP family.

Its function is as follows. Binds medium- and long-chain acyl-CoA esters with very high affinity and may function as an intracellular carrier of acyl-CoA esters. The chain is Acyl-CoA-binding protein from Brassica napus (Rape).